An 87-amino-acid polypeptide reads, in one-letter code: Small ribosomal subunit protein uS15 (87 aa).

It belongs to the universal ribosomal protein uS15 family. Part of the 30S ribosomal subunit. Forms a bridge to the 50S subunit in the 70S ribosome, contacting the 23S rRNA.

Functionally, one of the primary rRNA binding proteins, it binds directly to 16S rRNA where it helps nucleate assembly of the platform of the 30S subunit by binding and bridging several RNA helices of the 16S rRNA. In terms of biological role, forms an intersubunit bridge (bridge B4) with the 23S rRNA of the 50S subunit in the ribosome. This is Small ribosomal subunit protein uS15 from Clostridium botulinum (strain Eklund 17B / Type B).